We begin with the raw amino-acid sequence, 388 residues long: Succinyl-diaminopimelate desuccinylase (388 aa).

His72 serves as a coordination point for Zn(2+). Residue Asp74 is part of the active site. Asp105 is a binding site for Zn(2+). The active-site Proton acceptor is the Glu139. Zn(2+)-binding residues include Glu140, Glu168, and His353.

Belongs to the peptidase M20A family. DapE subfamily. Homodimer. It depends on Zn(2+) as a cofactor. Co(2+) serves as cofactor.

The catalysed reaction is N-succinyl-(2S,6S)-2,6-diaminopimelate + H2O = (2S,6S)-2,6-diaminopimelate + succinate. Its pathway is amino-acid biosynthesis; L-lysine biosynthesis via DAP pathway; LL-2,6-diaminopimelate from (S)-tetrahydrodipicolinate (succinylase route): step 3/3. In terms of biological role, catalyzes the hydrolysis of N-succinyl-L,L-diaminopimelic acid (SDAP), forming succinate and LL-2,6-diaminopimelate (DAP), an intermediate involved in the bacterial biosynthesis of lysine and meso-diaminopimelic acid, an essential component of bacterial cell walls. The polypeptide is Succinyl-diaminopimelate desuccinylase (Orientia tsutsugamushi (strain Boryong) (Rickettsia tsutsugamushi)).